The sequence spans 783 residues: Cyclin-dependent kinase 11A (783 aa).

Residues 18–58 (QEKKRRKEQEEKAEIKRLKNSDDRDSKRDSLEEGELRDHCM) are compositionally biased toward basic and acidic residues. Positions 18-396 (QEKKRRKEQE…SALTEGDYVP (379 aa)) are disordered. Residues Ser47 and Ser72 each carry the phosphoserine modification. The span at 95-125 (EKVHHRKDEKRKEKWKHARVKEREHERRKRH) shows a compositional bias: basic residues. Composition is skewed to basic and acidic residues over residues 126–215 (REEQ…DKVK), 226–241 (PPRE…KPGE), and 252–264 (QLKE…RDLL). Ser271 is modified (phosphoserine). Over residues 279–290 (SAESSSAESGSG) the composition is skewed to low complexity. 2 stretches are compositionally biased toward acidic residues: residues 291 to 352 (SEEE…EERE) and 371 to 380 (ESEEAEEEVG). One can recognise a Protein kinase domain in the interval 427–647 (QCLNRIEEGT…VFKELGTPSE (221 aa)). Residues 432–440 (IEEGTYGVV) and Lys455 each bind ATP. Ser470 carries the phosphoserine; by CDK7 modification. Position 476 is a phosphothreonine; by CDK7 (Thr476). Asp550 functions as the Proton acceptor in the catalytic mechanism. Ser577 bears the Phosphoserine mark. A Phosphotyrosine modification is found at Tyr582. A phosphothreonine mark is found at Thr583 and Thr739. Residues 721-783 (SMFPTWPAKS…AAGPGFSLKF (63 aa)) are disordered. Ser740 carries the post-translational modification Phosphoserine.

The protein belongs to the protein kinase superfamily. CMGC Ser/Thr protein kinase family. CDC2/CDKX subfamily. As to quaternary structure, the cleaved p110 isoform, p110C, binds to the serine/threonine kinase PAK1. The p58 isoform but not the p110 isoform or p110C interacts with CCND3. The p110 isoforms are found in large molecular weight complexes containing CCNL1 and SFRS7. Mg(2+) serves as cofactor. During apoptosis, induced by Fas or tumor necrosis factor, specific CKD11 p110 isoforms are cleaved by caspases to produce a protein (p110C) that contains the C-terminal kinase domain of the CDK11 proteins. In terms of tissue distribution, expressed ubiquitously. Some evidence of isoform-specific tissue distribution.

It is found in the cytoplasm. It localises to the nucleus. The enzyme catalyses L-seryl-[protein] + ATP = O-phospho-L-seryl-[protein] + ADP + H(+). It carries out the reaction L-threonyl-[protein] + ATP = O-phospho-L-threonyl-[protein] + ADP + H(+). Phosphorylation at Thr-436 or Tyr-437 inactivates the enzyme, while phosphorylation at Thr-583 activates it. Functionally, appears to play multiple roles in cell cycle progression, cytokinesis and apoptosis. The p110 isoforms have been suggested to be involved in pre-mRNA splicing, potentially by phosphorylating the splicing protein SFRS7. The p58 isoform may act as a negative regulator of normal cell cycle progression. This is Cyclin-dependent kinase 11A (CDK11A) from Homo sapiens (Human).